The sequence spans 298 residues: Glutamyl-Q tRNA(Asp) synthetase (298 aa).

Residues 8–12 (RFAPS) and E44 contribute to the L-glutamate site. Residues 11–21 (PSPTGPLHFGS) carry the 'HIGH' region motif. Positions 100, 102, 123, and 127 each coordinate Zn(2+). Residues Y183 and R201 each coordinate L-glutamate. The 'KMSKS' region motif lies at 239–243 (KLSKQ). K242 contacts ATP.

It belongs to the class-I aminoacyl-tRNA synthetase family. GluQ subfamily. It depends on Zn(2+) as a cofactor.

Its function is as follows. Catalyzes the tRNA-independent activation of glutamate in presence of ATP and the subsequent transfer of glutamate onto a tRNA(Asp). Glutamate is transferred on the 2-amino-5-(4,5-dihydroxy-2-cyclopenten-1-yl) moiety of the queuosine in the wobble position of the QUC anticodon. In Burkholderia cenocepacia (strain ATCC BAA-245 / DSM 16553 / LMG 16656 / NCTC 13227 / J2315 / CF5610) (Burkholderia cepacia (strain J2315)), this protein is Glutamyl-Q tRNA(Asp) synthetase.